A 164-amino-acid chain; its full sequence is UPF0304 protein ECA3037 (164 aa).

This sequence belongs to the UPF0304 family.

The polypeptide is UPF0304 protein ECA3037 (Pectobacterium atrosepticum (strain SCRI 1043 / ATCC BAA-672) (Erwinia carotovora subsp. atroseptica)).